Here is a 305-residue protein sequence, read N- to C-terminus: Ribosomal RNA small subunit methyltransferase H (305 aa).

S-adenosyl-L-methionine contacts are provided by residues 47–49 (GGH), Asp66, Phe93, Asp108, and Gln115. A disordered region spans residues 280–305 (ASAEEQERNPRSRSAKLRIARKRSES). Residues 290-305 (RSRSAKLRIARKRSES) are compositionally biased toward basic residues.

The protein belongs to the methyltransferase superfamily. RsmH family.

The protein localises to the cytoplasm. It catalyses the reaction cytidine(1402) in 16S rRNA + S-adenosyl-L-methionine = N(4)-methylcytidine(1402) in 16S rRNA + S-adenosyl-L-homocysteine + H(+). Functionally, specifically methylates the N4 position of cytidine in position 1402 (C1402) of 16S rRNA. The sequence is that of Ribosomal RNA small subunit methyltransferase H from Synechococcus sp. (strain WH7803).